The following is a 321-amino-acid chain: Transcription factor MYB60 (321 aa).

HTH myb-type domains are found at residues 9 to 65 (KVGI…RPGI) and 66 to 116 (KRGN…KKKI). 2 consecutive DNA-binding regions (H-T-H motif) follow at residues 37-61 (WRSV…TNYL) and 89-112 (WAAI…NTHL). An S-nitrosocysteine mark is found at cysteine 49 and cysteine 53. Disordered regions lie at residues 196-215 (SPKA…EGSI) and 263-291 (HHQT…QKKH). Residues 206–215 (QNSSLEEGSI) are compositionally biased toward polar residues. The span at 273 to 290 (SDDHDHDHEMKMDHDQKK) shows a compositional bias: basic and acidic residues.

In terms of tissue distribution, restricted to stomatal guard cells. Mostly expressed in leaves, cotyledons, hypocotyls, seeds and ripened berry skins.

The protein resides in the nucleus. Functionally, transcription factor involved in the regulation of gene (e.g. drought-regulated and flavonoid biosynthetic genes) expression and stomatal movements leading to negative regulation of responses to drought and responses to other physiological stimuli (e.g. light). The chain is Transcription factor MYB60 from Vitis vinifera (Grape).